The following is a 184-amino-acid chain: dCTP deaminase (184 aa).

Residues 107–112 (KSTYAR), 131–133 (TLE), Gln-152, Tyr-166, and Gln-176 contribute to the dCTP site. Glu-133 acts as the Proton donor/acceptor in catalysis.

The protein belongs to the dCTP deaminase family. In terms of assembly, homotrimer.

The enzyme catalyses dCTP + H2O + H(+) = dUTP + NH4(+). It participates in pyrimidine metabolism; dUMP biosynthesis; dUMP from dCTP (dUTP route): step 1/2. In terms of biological role, catalyzes the deamination of dCTP to dUTP. The protein is dCTP deaminase of Erythrobacter litoralis (strain HTCC2594).